Consider the following 860-residue polypeptide: Leucine--tRNA ligase (860 aa).

The short motif at 42 to 52 (PYPSGRLHMGH) is the 'HIGH' region element. Residues 619 to 623 (KMSKS) carry the 'KMSKS' region motif. Position 622 (Lys-622) interacts with ATP.

The protein belongs to the class-I aminoacyl-tRNA synthetase family.

The protein resides in the cytoplasm. It carries out the reaction tRNA(Leu) + L-leucine + ATP = L-leucyl-tRNA(Leu) + AMP + diphosphate. The chain is Leucine--tRNA ligase from Erwinia tasmaniensis (strain DSM 17950 / CFBP 7177 / CIP 109463 / NCPPB 4357 / Et1/99).